The primary structure comprises 377 residues: Chaperone protein DnaJ (377 aa).

Positions 5-70 (DYYEVLEVSR…EKRTIYDRYG (66 aa)) constitute a J domain. The CR-type zinc finger occupies 138–215 (GCEKKIDITY…CQGKGYHEET (78 aa)). Cysteine 151, cysteine 154, cysteine 167, cysteine 170, cysteine 189, cysteine 192, cysteine 203, and cysteine 206 together coordinate Zn(2+). CXXCXGXG motif repeat units follow at residues 151–158 (CEECGGTG), 167–174 (CDYCGGQG), 189–196 (CPKCHGEG), and 203–210 (CPSCQGKG).

Belongs to the DnaJ family. As to quaternary structure, homodimer. The cofactor is Zn(2+).

The protein localises to the cytoplasm. Participates actively in the response to hyperosmotic and heat shock by preventing the aggregation of stress-denatured proteins and by disaggregating proteins, also in an autonomous, DnaK-independent fashion. Unfolded proteins bind initially to DnaJ; upon interaction with the DnaJ-bound protein, DnaK hydrolyzes its bound ATP, resulting in the formation of a stable complex. GrpE releases ADP from DnaK; ATP binding to DnaK triggers the release of the substrate protein, thus completing the reaction cycle. Several rounds of ATP-dependent interactions between DnaJ, DnaK and GrpE are required for fully efficient folding. Also involved, together with DnaK and GrpE, in the DNA replication of plasmids through activation of initiation proteins. The protein is Chaperone protein DnaJ of Sulfurovum sp. (strain NBC37-1).